The sequence spans 153 residues: UPF0260 protein YcgN (153 aa).

Belongs to the UPF0260 family.

This is UPF0260 protein YcgN from Salmonella paratyphi B (strain ATCC BAA-1250 / SPB7).